A 234-amino-acid polypeptide reads, in one-letter code: Isoprenyl transferase (234 aa).

Asp13 is a catalytic residue. Asp13 is a Mg(2+) binding site. Substrate-binding positions include Gly14 to Arg17, Trp18, Arg26, His30, and Ser58 to Glu60. Asn61 acts as the Proton acceptor in catalysis. Substrate is bound by residues Trp62, Arg64, Arg180, and Arg186–Ser188. Residue Glu199 participates in Mg(2+) binding.

The protein belongs to the UPP synthase family. In terms of assembly, homodimer. The cofactor is Mg(2+).

Its function is as follows. Catalyzes the condensation of isopentenyl diphosphate (IPP) with allylic pyrophosphates generating different type of terpenoids. This is Isoprenyl transferase (uppS) from Helicobacter pylori (strain ATCC 700392 / 26695) (Campylobacter pylori).